A 323-amino-acid chain; its full sequence is Glyoxylate/hydroxypyruvate reductase B (323 aa).

Residues arginine 237 and glutamate 266 contribute to the active site. Histidine 285 acts as the Proton donor in catalysis.

It belongs to the D-isomer specific 2-hydroxyacid dehydrogenase family. GhrB subfamily. In terms of assembly, homodimer.

Its subcellular location is the cytoplasm. It carries out the reaction glycolate + NADP(+) = glyoxylate + NADPH + H(+). The enzyme catalyses (R)-glycerate + NAD(+) = 3-hydroxypyruvate + NADH + H(+). It catalyses the reaction (R)-glycerate + NADP(+) = 3-hydroxypyruvate + NADPH + H(+). Functionally, catalyzes the NADPH-dependent reduction of glyoxylate and hydroxypyruvate into glycolate and glycerate, respectively. The polypeptide is Glyoxylate/hydroxypyruvate reductase B (Klebsiella pneumoniae subsp. pneumoniae (strain ATCC 700721 / MGH 78578)).